An 85-amino-acid polypeptide reads, in one-letter code: ATP synthase subunit c (85 aa).

2 helical membrane passes run 10 to 30 and 53 to 73; these read IAVA…FAVL and FIIA…ALLF.

The protein belongs to the ATPase C chain family. In terms of assembly, F-type ATPases have 2 components, F(1) - the catalytic core - and F(0) - the membrane proton channel. F(1) has five subunits: alpha(3), beta(3), gamma(1), delta(1), epsilon(1). F(0) has three main subunits: a(1), b(2) and c(10-14). The alpha and beta chains form an alternating ring which encloses part of the gamma chain. F(1) is attached to F(0) by a central stalk formed by the gamma and epsilon chains, while a peripheral stalk is formed by the delta and b chains.

Its subcellular location is the cell inner membrane. In terms of biological role, f(1)F(0) ATP synthase produces ATP from ADP in the presence of a proton or sodium gradient. F-type ATPases consist of two structural domains, F(1) containing the extramembraneous catalytic core and F(0) containing the membrane proton channel, linked together by a central stalk and a peripheral stalk. During catalysis, ATP synthesis in the catalytic domain of F(1) is coupled via a rotary mechanism of the central stalk subunits to proton translocation. Its function is as follows. Key component of the F(0) channel; it plays a direct role in translocation across the membrane. A homomeric c-ring of between 10-14 subunits forms the central stalk rotor element with the F(1) delta and epsilon subunits. The polypeptide is ATP synthase subunit c (Vibrio vulnificus (strain CMCP6)).